The sequence spans 500 residues: Probable malate:quinone oxidoreductase (500 aa).

It belongs to the MQO family. It depends on FAD as a cofactor.

It carries out the reaction (S)-malate + a quinone = a quinol + oxaloacetate. It functions in the pathway carbohydrate metabolism; tricarboxylic acid cycle; oxaloacetate from (S)-malate (quinone route): step 1/1. This Prochlorococcus marinus (strain MIT 9211) protein is Probable malate:quinone oxidoreductase.